Here is a 104-residue protein sequence, read N- to C-terminus: Photosystem II reaction center Psb28 protein (104 aa).

Belongs to the Psb28 family. As to quaternary structure, part of the photosystem II complex.

It is found in the cellular thylakoid membrane. The chain is Photosystem II reaction center Psb28 protein from Synechococcus sp. (strain JA-2-3B'a(2-13)) (Cyanobacteria bacterium Yellowstone B-Prime).